An 84-amino-acid chain; its full sequence is Small ribosomal subunit protein uS17 (84 aa).

This sequence belongs to the universal ribosomal protein uS17 family. Part of the 30S ribosomal subunit.

One of the primary rRNA binding proteins, it binds specifically to the 5'-end of 16S ribosomal RNA. The protein is Small ribosomal subunit protein uS17 of Aliivibrio salmonicida (strain LFI1238) (Vibrio salmonicida (strain LFI1238)).